The sequence spans 74 residues: MLVLSRKANESIMIGKDIEIKVLGIEDGKVKIGIDAPRGLEIYRREIYVEIEEENITASKQNLNLENLKILFKK.

Belongs to the CsrA/RsmA family. As to quaternary structure, homodimer; the beta-strands of each monomer intercalate to form a hydrophobic core, while the alpha-helices form wings that extend away from the core.

The protein resides in the cytoplasm. In terms of biological role, a translational regulator that binds mRNA to regulate translation initiation and/or mRNA stability. Usually binds in the 5'-UTR at or near the Shine-Dalgarno sequence preventing ribosome-binding, thus repressing translation. Its main target seems to be the major flagellin gene, while its function is anatagonized by FliW. In Alkaliphilus oremlandii (strain OhILAs) (Clostridium oremlandii (strain OhILAs)), this protein is Translational regulator CsrA.